Consider the following 66-residue polypeptide: Stress-associated endoplasmic reticulum protein 1 (66 aa).

The interval 1–33 is disordered; the sequence is MVAKQRIRMANEKHSKNITQRGNVAKTSRNAPG. At 1–38 the chain is on the cytoplasmic side; sequence MVAKQRIRMANEKHSKNITQRGNVAKTSRNAPGEKASV. Positions 17–30 are enriched in polar residues; sequence NITQRGNVAKTSRN. Residues 39–59 traverse the membrane as a helical segment; that stretch reads GPWLLALFIFVVCGSAIFQII. The Extracellular portion of the chain corresponds to 60–66; sequence QSIRMGM.

The protein belongs to the RAMP4 family. As to quaternary structure, interacts with SEC61B, SEC61A1 and the SEC61 complex. Interacts with CANX.

The protein localises to the membrane. Its subcellular location is the endoplasmic reticulum membrane. In terms of biological role, interacts with target proteins during their translocation into the lumen of the endoplasmic reticulum. Protects unfolded target proteins against degradation during ER stress. May facilitate glycosylation of target proteins after termination of ER stress. May modulate the use of N-glycosylation sites on target proteins. The polypeptide is Stress-associated endoplasmic reticulum protein 1 (SERP1) (Pongo abelii (Sumatran orangutan)).